The primary structure comprises 412 residues: Type II methyltransferase M.Sau3AI (412 aa).

The SAM-dependent MTase C5-type domain occupies 4-402 (IKVVELFAGV…NQIEKIDSIT (399 aa)). Residue Cys-85 is part of the active site.

Belongs to the class I-like SAM-binding methyltransferase superfamily. C5-methyltransferase family.

The enzyme catalyses a 2'-deoxycytidine in DNA + S-adenosyl-L-methionine = a 5-methyl-2'-deoxycytidine in DNA + S-adenosyl-L-homocysteine + H(+). A methylase that recognizes the double-stranded sequence 5'-GATC-3', methylates C-4 on both strands and protects the DNA from cleavage by the Sau3AI endonuclease. The chain is Type II methyltransferase M.Sau3AI (sau3AIM) from Staphylococcus aureus.